The primary structure comprises 317 residues: Transaldolase (317 aa).

The active-site Schiff-base intermediate with substrate is the lysine 126.

This sequence belongs to the transaldolase family. Type 1 subfamily. As to quaternary structure, homodimer.

The protein resides in the cytoplasm. The catalysed reaction is D-sedoheptulose 7-phosphate + D-glyceraldehyde 3-phosphate = D-erythrose 4-phosphate + beta-D-fructose 6-phosphate. The protein operates within carbohydrate degradation; pentose phosphate pathway; D-glyceraldehyde 3-phosphate and beta-D-fructose 6-phosphate from D-ribose 5-phosphate and D-xylulose 5-phosphate (non-oxidative stage): step 2/3. In terms of biological role, transaldolase is important for the balance of metabolites in the pentose-phosphate pathway. This is Transaldolase from Burkholderia orbicola (strain MC0-3).